The primary structure comprises 234 residues: Biosynthetic peptidoglycan transglycosylase (234 aa).

A helical transmembrane segment spans residues 11–31 (RFLLFAMLGFVGLSVLLVLVF).

Belongs to the glycosyltransferase 51 family.

It localises to the cell inner membrane. It catalyses the reaction [GlcNAc-(1-&gt;4)-Mur2Ac(oyl-L-Ala-gamma-D-Glu-L-Lys-D-Ala-D-Ala)](n)-di-trans,octa-cis-undecaprenyl diphosphate + beta-D-GlcNAc-(1-&gt;4)-Mur2Ac(oyl-L-Ala-gamma-D-Glu-L-Lys-D-Ala-D-Ala)-di-trans,octa-cis-undecaprenyl diphosphate = [GlcNAc-(1-&gt;4)-Mur2Ac(oyl-L-Ala-gamma-D-Glu-L-Lys-D-Ala-D-Ala)](n+1)-di-trans,octa-cis-undecaprenyl diphosphate + di-trans,octa-cis-undecaprenyl diphosphate + H(+). The protein operates within cell wall biogenesis; peptidoglycan biosynthesis. Functionally, peptidoglycan polymerase that catalyzes glycan chain elongation from lipid-linked precursors. This Chromohalobacter salexigens (strain ATCC BAA-138 / DSM 3043 / CIP 106854 / NCIMB 13768 / 1H11) protein is Biosynthetic peptidoglycan transglycosylase.